The following is a 244-amino-acid chain: Monothiol glutaredoxin-4 (244 aa).

The 105-residue stretch at serine 2–glutamine 106 folds into the Thioredoxin domain. A Glutaredoxin domain is found at asparagine 147 to asparagine 244. A glutathione-binding site is contributed by lysine 164. Residue cysteine 172 participates in [2Fe-2S] cluster binding. Residues arginine 201–lysine 205 and leucine 226–aspartate 227 each bind glutathione.

It belongs to the glutaredoxin family. Monothiol subfamily. Homodimer. Interacts with php4.

The protein localises to the cytoplasm. Its subcellular location is the nucleus. In terms of biological role, monothiol glutaredoxin involved in the biogenesis of iron-sulfur clusters. Binds one iron-sulfur cluster per dimer. The iron-sulfur cluster is bound between subunits, and is complexed by a bound glutathione and a cysteine residue from each subunit. The protein is Monothiol glutaredoxin-4 (grx4) of Schizosaccharomyces pombe (strain 972 / ATCC 24843) (Fission yeast).